The primary structure comprises 210 residues: 3-hexulose-6-phosphate synthase (210 aa).

The protein belongs to the HPS/KGPDC family. HPS subfamily.

It carries out the reaction D-ribulose 5-phosphate + formaldehyde = D-arabino-hex-3-ulose 6-phosphate. It functions in the pathway one-carbon metabolism; formaldehyde assimilation via RuMP pathway; D-fructose 6-phosphate from D-ribulose 5-phosphate and formaldehyde: step 1/2. Catalyzes the condensation of ribulose 5-phosphate with formaldehyde to form 3-hexulose 6-phosphate. The sequence is that of 3-hexulose-6-phosphate synthase from Staphylococcus epidermidis (strain ATCC 35984 / DSM 28319 / BCRC 17069 / CCUG 31568 / BM 3577 / RP62A).